The primary structure comprises 297 residues: Alarmin release inhibitor (297 aa).

Residues asparagine 107, asparagine 175, and asparagine 190 are each glycosylated (N-linked (GlcNAc...) asparagine). Residues 151-211 (TYDPTPNTPT…WVPTLGVCPK (61 aa)) form the Sushi domain. Residues cysteine 183 and cysteine 209 are joined by a disulfide bond.

In terms of assembly, interacts with mouse IL33 (in reduced form).

It is found in the secreted. The protein resides in the host nucleus. Its function is as follows. Secreted protein which suppresses the host allergic response by inhibiting the interaction of host IL33 with its receptor in order to maintain parasitic infection. Binds to both host IL33 and host nuclear DNA and this dual binding blocks the interaction of IL33 with its receptor, and tethers IL33 within necrotic cells, preventing its release, and blocking allergic response initiation. In Heligmosomoides polygyrus (Parasitic roundworm), this protein is Alarmin release inhibitor.